A 218-amino-acid polypeptide reads, in one-letter code: Small ribosomal subunit protein uS3c (218 aa).

In terms of domain architecture, KH type-2 spans 43–118 (IKNYVQKNTK…KFNIAITKIA (76 aa)).

This sequence belongs to the universal ribosomal protein uS3 family. Part of the 30S ribosomal subunit.

Its subcellular location is the plastid. It is found in the chloroplast. This is Small ribosomal subunit protein uS3c (rps3) from Coffea arabica (Arabian coffee).